Here is a 314-residue protein sequence, read N- to C-terminus: Olfactory receptor 2W3 (314 aa).

The Extracellular segment spans residues 1–25 (MDGTNGSTQTHFILLGFSDRPHLER). The N-linked (GlcNAc...) asparagine glycan is linked to asparagine 5. A helical membrane pass occupies residues 26 to 49 (ILFVVILIAYLLTLVGNTTIILVS). At 50–57 (RLDPHLHT) the chain is on the cytoplasmic side. A helical transmembrane segment spans residues 58 to 79 (PMYFFLAHLSFLDLSFTTSSIP). The Extracellular portion of the chain corresponds to 80–100 (QLLYNLNGCDKTISYMGCAIQ). The helical transmembrane segment at 101–120 (LFLFLGLGGVECLLLAVMAY) threads the bilayer. Over 121 to 139 (DRCVAICKPLHYMVIMNPR) the chain is Cytoplasmic. The chain crosses the membrane as a helical span at residues 140–158 (LCRGLVSVTWGCGVANSLA). The Extracellular portion of the chain corresponds to 159-195 (MSPVTLRLPRCGHHEVDHFLREMPALIRMACVSTVAI). The chain crosses the membrane as a helical span at residues 196 to 219 (EGTVFVLAVGVVLSPLVFILLSYS). The Cytoplasmic portion of the chain corresponds to 220–236 (YIVRAVLQIRSASGRQK). The helical transmembrane segment at 237–259 (AFGTCGSHLTVVSLFYGNIIYMY) threads the bilayer. Over 260-272 (MQPGASSSQDQGM) the chain is Extracellular. Residues 273-292 (FLMLFYNIVTPLLNPLIYTL) form a helical membrane-spanning segment. Topologically, residues 293–314 (RNREVKGALGRLLLGKRELGKE) are cytoplasmic.

Belongs to the G-protein coupled receptor 1 family.

It localises to the cell membrane. In terms of biological role, odorant receptor. This chain is Olfactory receptor 2W3 (OR2W3), found in Homo sapiens (Human).